A 239-amino-acid polypeptide reads, in one-letter code: ATP-dependent dethiobiotin synthetase BioD (239 aa).

15–20 contacts ATP; the sequence is EIGKTF. Thr19 contributes to the Mg(2+) binding site. Residue Lys40 is part of the active site. ATP-binding positions include Asp57, 118–121, and 178–179; these read EGVG and NH. Mg(2+) is bound by residues Asp57 and Glu118.

This sequence belongs to the dethiobiotin synthetase family. As to quaternary structure, homodimer. Requires Mg(2+) as cofactor.

The protein localises to the cytoplasm. The catalysed reaction is (7R,8S)-7,8-diammoniononanoate + CO2 + ATP = (4R,5S)-dethiobiotin + ADP + phosphate + 3 H(+). Its pathway is cofactor biosynthesis; biotin biosynthesis; biotin from 7,8-diaminononanoate: step 1/2. Catalyzes a mechanistically unusual reaction, the ATP-dependent insertion of CO2 between the N7 and N8 nitrogen atoms of 7,8-diaminopelargonic acid (DAPA, also called 7,8-diammoniononanoate) to form a ureido ring. The protein is ATP-dependent dethiobiotin synthetase BioD of Burkholderia orbicola (strain MC0-3).